Reading from the N-terminus, the 753-residue chain is Metal regulatory transcription factor 1 (753 aa).

At Gly-2 the chain carries N-acetylglycine. Position 5 is a phosphoserine (Ser-5). Residues 133-138 carry the Nuclear localization signal motif; that stretch reads KRKEVK. 6 consecutive C2H2-type zinc fingers follow at residues 140–164, 170–194, 200–224, 229–253, 259–283, and 289–313; these read YQCT…QKTH, FVCN…VRVH, FECD…QRLH, FNCE…IRTH, FRCD…VRTH, and FFCP…MKGH. Ser-305 is modified (phosphoserine). Disordered stretches follow at residues 308–328, 395–466, and 648–715; these read SHMK…QHNG, ESFN…ALLQ, and SRRK…LSAM. Residues 408–417 are compositionally biased toward polar residues; it reads PPSTGNSASL. The segment covering 655 to 666 has biased composition (pro residues); it reads SPPPPEPSPQAP. A compositionally biased stretch (low complexity) spans 679–698; the sequence is SSAPVPGSSSSTLPSSCEQS. Residues 700-712 show a composition bias toward polar residues; it reads QAETPSDPQTETL.

The protein resides in the nucleus. It is found in the cytoplasm. Zinc-dependent transcriptional regulator of cellular adaption to conditions of exposure to heavy metals. Binds to metal responsive elements (MRE) in promoters and activates the transcription of metallothionein genes like metallothionein-2/MT2A. Also regulates the expression of metalloproteases in response to intracellular zinc and functions as a catabolic regulator of cartilages. The protein is Metal regulatory transcription factor 1 (MTF1) of Homo sapiens (Human).